Consider the following 270-residue polypeptide: Bark lectin (270 aa).

A signal peptide spans 1-15 (ISITFFLLLLNKVNS). 3 N-linked (GlcNAc...) asparagine glycosylation sites follow: asparagine 60, asparagine 76, and asparagine 127. The Mn(2+) site is built by glutamate 141 and aspartate 143. The Ca(2+) site is built by aspartate 143, histidine 145, asparagine 147, and aspartate 150. Mn(2+)-binding residues include aspartate 150 and histidine 155. Residue asparagine 201 is glycosylated (N-linked (GlcNAc...) asparagine).

This sequence belongs to the leguminous lectin family.

Functionally, galNAc-specific lectin. In Styphnolobium japonicum (Japanese pagoda tree), this protein is Bark lectin.